Consider the following 328-residue polypeptide: DNA-directed RNA polymerase subunit alpha (328 aa).

Residues 1–232 (MSTQGFLKPR…DQISVFAALE (232 aa)) form an alpha N-terminal domain (alpha-NTD) region. The segment at 248 to 328 (IDPVLLRPVD…NWPPLGLERP (81 aa)) is alpha C-terminal domain (alpha-CTD).

The protein belongs to the RNA polymerase alpha chain family. In terms of assembly, homodimer. The RNAP catalytic core consists of 2 alpha, 1 beta, 1 beta' and 1 omega subunit. When a sigma factor is associated with the core the holoenzyme is formed, which can initiate transcription.

It carries out the reaction RNA(n) + a ribonucleoside 5'-triphosphate = RNA(n+1) + diphosphate. DNA-dependent RNA polymerase catalyzes the transcription of DNA into RNA using the four ribonucleoside triphosphates as substrates. In Bordetella petrii (strain ATCC BAA-461 / DSM 12804 / CCUG 43448), this protein is DNA-directed RNA polymerase subunit alpha.